The sequence spans 225 residues: Cytidylate kinase (225 aa).

10 to 18 (GPASSGKST) contacts ATP.

Belongs to the cytidylate kinase family. Type 1 subfamily.

It localises to the cytoplasm. It carries out the reaction CMP + ATP = CDP + ADP. It catalyses the reaction dCMP + ATP = dCDP + ADP. The chain is Cytidylate kinase from Streptococcus gordonii (strain Challis / ATCC 35105 / BCRC 15272 / CH1 / DL1 / V288).